A 399-amino-acid polypeptide reads, in one-letter code: Fructose-1,6-bisphosphate aldolase/phosphatase (399 aa).

D11 functions as the Proton acceptor; for FBP phosphatase activity in the catalytic mechanism. D11, H18, D52, and D53 together coordinate Mg(2+). H18 is a binding site for beta-D-fructose 1,6-bisphosphate. Position 18 (H18) interacts with dihydroxyacetone phosphate. Residue Y91 participates in beta-D-fructose 1,6-bisphosphate binding. Mg(2+) is bound at residue Q95. 104 to 105 is a binding site for beta-D-fructose 1,6-bisphosphate; it reads GN. D132 is a Mg(2+) binding site. K133 contacts beta-D-fructose 1,6-bisphosphate. Residue K133 participates in dihydroxyacetone phosphate binding. The active-site Proton donor/acceptor; for FBP aldolase activity is Y229. The Mg(2+) site is built by K232, D233, and D234. The active-site Schiff-base intermediate with DHAP; for FBP aldolase activity is K232. Beta-D-fructose 1,6-bisphosphate-binding positions include 242–243, R266, D297, and Y358; that span reads QS. Residues R266 and D297 each contribute to the dihydroxyacetone phosphate site.

It belongs to the FBP aldolase/phosphatase family. As to quaternary structure, homooctamer; dimer of tetramers. Requires Mg(2+) as cofactor.

It carries out the reaction beta-D-fructose 1,6-bisphosphate + H2O = beta-D-fructose 6-phosphate + phosphate. The enzyme catalyses beta-D-fructose 1,6-bisphosphate = D-glyceraldehyde 3-phosphate + dihydroxyacetone phosphate. The protein operates within carbohydrate biosynthesis; gluconeogenesis. In terms of biological role, catalyzes two subsequent steps in gluconeogenesis: the aldol condensation of dihydroxyacetone phosphate (DHAP) and glyceraldehyde-3-phosphate (GA3P) to fructose-1,6-bisphosphate (FBP), and the dephosphorylation of FBP to fructose-6-phosphate (F6P). This chain is Fructose-1,6-bisphosphate aldolase/phosphatase, found in Pyrobaculum neutrophilum (strain DSM 2338 / JCM 9278 / NBRC 100436 / V24Sta) (Thermoproteus neutrophilus).